Reading from the N-terminus, the 377-residue chain is Nitric oxide reductase FlRd-NAD(+) reductase (377 aa).

Belongs to the FAD-dependent oxidoreductase family. Requires FAD as cofactor.

The protein resides in the cytoplasm. The enzyme catalyses 2 reduced [nitric oxide reductase rubredoxin domain] + NAD(+) + H(+) = 2 oxidized [nitric oxide reductase rubredoxin domain] + NADH. It functions in the pathway nitrogen metabolism; nitric oxide reduction. Its function is as follows. One of at least two accessory proteins for anaerobic nitric oxide (NO) reductase. Reduces the rubredoxin moiety of NO reductase. The polypeptide is Nitric oxide reductase FlRd-NAD(+) reductase (Salmonella agona (strain SL483)).